Here is a 261-residue protein sequence, read N- to C-terminus: WW domain-binding protein 2 (261 aa).

In terms of domain architecture, GRAM spans 1-84 (MALNKNHSEG…YLMKDCEIKQ (84 aa)). Position 192 is a phosphotyrosine (Tyr192). Positions 196 to 200 (PPPPY) match the PPxY motif 1 motif. Over residues 196–209 (PPPPYPGPMEPPVS) the composition is skewed to pro residues. Positions 196–261 (PPPPYPGPME…YYPPEDKKTQ (66 aa)) are disordered. A compositionally biased stretch (low complexity) spans 210–230 (GPSAPATPAAEAKAAEAAASA). A Phosphotyrosine modification is found at Tyr231. Pro residues predominate over residues 245-254 (SQPPPPPYYP). Positions 248 to 252 (PPPPY) match the PPxY motif 2 motif.

Binds to the WW domain of YAP1, WWP1 and WWP2. Interacts with NEDD4. Interacts with ESR1 and UBE3A. Post-translationally, phosphorylated in repsonse to EGF as well as estrogen and progesterone hormones. Tyr-192 and Tyr-231 are phosphorylated by YES and SRC inducing nuclear translocation. In terms of tissue distribution, expressed in the ear and the eye. Isoform 1 is expressed in brain, inner ear and organ of Corti. Isoform 2 is only detected in brain.

It is found in the cytoplasm. It localises to the nucleus. In terms of biological role, acts as a transcriptional coactivator of estrogen and progesterone receptors (ESR1 and PGR) upon hormone activation. In presence of estrogen, binds to ESR1-responsive promoters. Synergizes with YAP1 to enhance PGR activity. Modulates expression of post-synaptic scaffolding proteins via regulation of ESR1, ESR2 and PGR. The chain is WW domain-binding protein 2 (Wbp2) from Mus musculus (Mouse).